Consider the following 154-residue polypeptide: S-ribosylhomocysteine lyase (154 aa).

H57, H61, and C124 together coordinate Fe cation.

Belongs to the LuxS family. As to quaternary structure, homodimer. It depends on Fe cation as a cofactor.

It catalyses the reaction S-(5-deoxy-D-ribos-5-yl)-L-homocysteine = (S)-4,5-dihydroxypentane-2,3-dione + L-homocysteine. Its function is as follows. Involved in the synthesis of autoinducer 2 (AI-2) which is secreted by bacteria and is used to communicate both the cell density and the metabolic potential of the environment. The regulation of gene expression in response to changes in cell density is called quorum sensing. Catalyzes the transformation of S-ribosylhomocysteine (RHC) to homocysteine (HC) and 4,5-dihydroxy-2,3-pentadione (DPD). The chain is S-ribosylhomocysteine lyase from Exiguobacterium sibiricum (strain DSM 17290 / CCUG 55495 / CIP 109462 / JCM 13490 / 255-15).